The primary structure comprises 83 residues: Small ribosomal subunit protein uS17 (83 aa).

Belongs to the universal ribosomal protein uS17 family. In terms of assembly, part of the 30S ribosomal subunit.

Functionally, one of the primary rRNA binding proteins, it binds specifically to the 5'-end of 16S ribosomal RNA. The chain is Small ribosomal subunit protein uS17 from Colwellia psychrerythraea (strain 34H / ATCC BAA-681) (Vibrio psychroerythus).